A 150-amino-acid polypeptide reads, in one-letter code: Lipoprotein signal peptidase (150 aa).

A run of 3 helical transmembrane segments spans residues 8-28 (FYALVGFLVFLDQVTKYLAHA), 58-78 (GFSWLFFLLGIIALIFIGWFL), and 81-101 (TTGSIVFLALLQGGIAGNVFD). Residues Asp116 and Asp132 contribute to the active site. Residues 126–146 (VVFNIADLFILAGVFGTFLFL) form a helical membrane-spanning segment.

The protein belongs to the peptidase A8 family.

The protein resides in the cell membrane. It carries out the reaction Release of signal peptides from bacterial membrane prolipoproteins. Hydrolyzes -Xaa-Yaa-Zaa-|-(S,diacylglyceryl)Cys-, in which Xaa is hydrophobic (preferably Leu), and Yaa (Ala or Ser) and Zaa (Gly or Ala) have small, neutral side chains.. It participates in protein modification; lipoprotein biosynthesis (signal peptide cleavage). Functionally, this protein specifically catalyzes the removal of signal peptides from prolipoproteins. The polypeptide is Lipoprotein signal peptidase (Tropheryma whipplei (strain Twist) (Whipple's bacillus)).